Reading from the N-terminus, the 391-residue chain is Candidapepsin-1 (391 aa).

An N-terminal signal peptide occupies residues 1 to 18 (MFLKNIFIALAIALLVDA). Positions 19-50 (SPAKRSPGFVTLDFDVIKTPVNATGQEGKVKR) are cleaved as a propeptide — activation peptide. N40 carries N-linked (GlcNAc...) asparagine glycosylation. The region spanning 64–377 (YAADITIGSN…DLDDDKISLA (314 aa)) is the Peptidase A1 domain. D82 is a catalytic residue. Cysteines 97 and 109 form a disulfide. Residue D267 is part of the active site. C305 and C343 are oxidised to a cystine.

It belongs to the peptidase A1 family. Post-translationally, O-glycosylated.

The protein localises to the secreted. The enzyme catalyses Preferential cleavage at the carboxyl of hydrophobic amino acids, but fails to cleave 15-Leu-|-Tyr-16, 16-Tyr-|-Leu-17 and 24-Phe-|-Phe-25 of insulin B chain. Activates trypsinogen, and degrades keratin.. This Candida albicans (strain WO-1) (Yeast) protein is Candidapepsin-1 (SAP1).